A 473-amino-acid chain; its full sequence is Photosystem II CP43 reaction center protein (473 aa).

Positions 1 to 14 are excised as a propeptide; that stretch reads MKILYSLRRFYHVE. T15 carries the N-acetylthreonine modification. At T15 the chain carries Phosphothreonine. Helical transmembrane passes span 69-93, 134-155, 178-200, 255-275, and 291-312; these read LFEV…PHLA, LLGP…QDRN, KALY…RKIT, KPFA…LSYS, and WFNN…ASQA. E367 contacts [CaMn4O5] cluster. A helical membrane pass occupies residues 447-471; that stretch reads RARAAAAGFEKGIDRDLEPVVYMTP.

This sequence belongs to the PsbB/PsbC family. PsbC subfamily. In terms of assembly, PSII is composed of 1 copy each of membrane proteins PsbA, PsbB, PsbC, PsbD, PsbE, PsbF, PsbH, PsbI, PsbJ, PsbK, PsbL, PsbM, PsbT, PsbX, PsbY, PsbZ, Psb30/Ycf12, at least 3 peripheral proteins of the oxygen-evolving complex and a large number of cofactors. It forms dimeric complexes. Binds multiple chlorophylls and provides some of the ligands for the Ca-4Mn-5O cluster of the oxygen-evolving complex. It may also provide a ligand for a Cl- that is required for oxygen evolution. PSII binds additional chlorophylls, carotenoids and specific lipids. serves as cofactor. Post-translationally, phosphorylated in both bundle sheath and mesophyll cells, phosphorylation increases when cells are grown under high rather than low light regimes (70 vs 900 umol photons/m-2/s).

The protein resides in the plastid. Its subcellular location is the chloroplast thylakoid membrane. Its function is as follows. One of the components of the core complex of photosystem II (PSII). It binds chlorophyll and helps catalyze the primary light-induced photochemical processes of PSII. PSII is a light-driven water:plastoquinone oxidoreductase, using light energy to abstract electrons from H(2)O, generating O(2) and a proton gradient subsequently used for ATP formation. This Zea mays (Maize) protein is Photosystem II CP43 reaction center protein.